The chain runs to 1505 residues: G patch domain-containing protein 8 (1505 aa).

Residues 40 to 86 enclose the G-patch domain; the sequence is SDNIGHRLLQKHGWKLGQGLGKSLQGRTDPIPIVVKYDVMGMGRMEM. Residues 89–124 adopt a coiled-coil conformation; it reads DYAEDATERRRVLEVEKEDTEELRQKYKDYVDKEKA. The segment at 136-160 adopts a C2H2-type zinc-finger fold; sequence FYCELCDKQYQKHQEFDNHINSYDH. Composition is skewed to basic and acidic residues over residues 166–175 and 182–206; these read LKDLKQREFA and SRKD…RKQA. Positions 166-244 are disordered; that stretch reads LKDLKQREFA…SSTNSGASAV (79 aa). Over residues 223–233 the composition is skewed to acidic residues; it reads VDEDGGEEDKD. Lysine 311 participates in a covalent cross-link: Glycyl lysine isopeptide (Lys-Gly) (interchain with G-Cter in SUMO2). 2 stretches are compositionally biased toward basic and acidic residues: residues 322-339 and 421-436; these read HAEE…EKSS and EGDH…ENRK. Disordered regions lie at residues 322 to 393 and 419 to 537; these read HAEE…EPEY and QMEG…FPVL. A compositionally biased stretch (polar residues) spans 437–449; that stretch reads SSSPKPQGCSKTA. Lysine 479 bears the N6-acetyllysine mark. Lysine 573 is covalently cross-linked (Glycyl lysine isopeptide (Lys-Gly) (interchain with G-Cter in SUMO2)). 2 stretches are compositionally biased toward basic and acidic residues: residues 575–612 and 648–665; these read SRNK…KSQE and SETE…EPSG. A disordered region spans residues 575–1304; it reads SRNKDAKAKG…ESTDGTEDAS (730 aa). Serine 648 is subject to Phosphoserine. The span at 666-687 shows a compositional bias: basic residues; it reads KSHRHKKKKKHKKSSKHKRKHK. Basic and acidic residues predominate over residues 688–702; it reads ADTEEKSSKAESGEK. Positions 703 to 715 are enriched in basic residues; the sequence is SKKRKKRKRKKNK. Serine 733, serine 735, and serine 753 each carry phosphoserine. Over residues 745-767 the composition is skewed to basic and acidic residues; that stretch reads AQDDSQRRSLPAEEGNSGKKDDG. The segment covering 794 to 804 has biased composition (basic residues); sequence ANTKHSSRSSH. Over residues 832–849 the composition is skewed to acidic residues; sequence SEEEEEEEEEEEEEDEDS. Residues 856-871 show a composition bias toward basic residues; the sequence is SRSRSGHRHSSHRSSR. The span at 872 to 900 shows a compositional bias: low complexity; that stretch reads RSYSSSSDASSDQSCYSRQHSYSDDSYSD. Residues serine 915 and serine 918 each carry the phosphoserine modification. Positions 923–932 are enriched in basic residues; the sequence is SKHRSKRHKY. A phosphoserine mark is found at serine 985, serine 1013, serine 1018, serine 1037, and serine 1039. The span at 1017–1031 shows a compositional bias: basic and acidic residues; the sequence is ESPEERRSGRRDFIR. Residues 1050–1063 are compositionally biased toward basic and acidic residues; sequence GPGKKEDGRGDDSK. A Phosphoserine modification is found at serine 1085. 3 stretches are compositionally biased toward basic and acidic residues: residues 1097–1112, 1163–1185, and 1211–1220; these read LLEK…KPNV, KKCE…EEGS, and EEPKSEEATA. Lysine 1109 is covalently cross-linked (Glycyl lysine isopeptide (Lys-Gly) (interchain with G-Cter in SUMO2)). The residue at position 1179 (serine 1179) is a Phosphoserine.

The sequence is that of G patch domain-containing protein 8 (Gpatch8) from Mus musculus (Mouse).